Consider the following 85-residue polypeptide: U4-theraphotoxin-Hhn1p (85 aa).

Positions 1 to 22 (MKMTLIAIPTCAAVLVLHTTAA) are cleaved as a signal peptide. Residues 23-48 (EELEAESQLMEVGMPDTELEAVDGER) constitute a propeptide that is removed on maturation. Cystine bridges form between cysteine 52–cysteine 66, cysteine 56–cysteine 77, and cysteine 71–cysteine 82.

This sequence belongs to the neurotoxin 12 (Hwtx-2) family. 02 (Hwtx-2) subfamily. In terms of tissue distribution, expressed by the venom gland.

The protein resides in the secreted. In terms of biological role, postsynaptic neurotoxin. The protein is U4-theraphotoxin-Hhn1p of Cyriopagopus hainanus (Chinese bird spider).